A 65-amino-acid polypeptide reads, in one-letter code: uncharacterized protein (65 aa).

A disordered region spans residues 1–22 (MEKETPQQETKQSTNKESGFFD). Residues 7–17 (QQETKQSTNKE) are compositionally biased toward polar residues. The stretch at 22–65 (DEIIKRTNQLLEKEKELHEKYNKEITSQQDQIDQLKKKINQLKY) forms a coiled coil.

This is an uncharacterized protein from Dictyostelium discoideum (Social amoeba).